We begin with the raw amino-acid sequence, 402 residues long: Multidrug resistance protein MdtH (402 aa).

The Cytoplasmic portion of the chain corresponds to 1 to 12 (MSRVSQARNLGK). The chain crosses the membrane as a helical span at residues 13 to 33 (YFLLIDNMLVVLVFFVVFPLI). The Periplasmic segment spans residues 34–98 (SIRFVDQMGW…GFATMGIAHE (65 aa)). Residues 99 to 116 (PWLLWFSCFLSGLGGTLF) traverse the membrane as a helical segment. At 117 to 138 (DPPRSALVVKLIRPEQRGRFFS) the chain is on the cytoplasmic side. A helical transmembrane segment spans residues 139-159 (LLMMQDSAGAVIGALLGSWLL). Residues 160–164 (QYDFR) lie on the Periplasmic side of the membrane. Residues 165–185 (LVCATGAILFILCALFNAWLL) traverse the membrane as a helical segment. At 186–213 (PAWKLSTVRTPVREGMRRVMSDKRFVTY) the chain is on the cytoplasmic side. The helical transmembrane segment at 214 to 234 (VLTLAGYYMLAVQVMLMLPIM) threads the bilayer. The Periplasmic portion of the chain corresponds to 235 to 243 (VNDIAGSPA). A helical membrane pass occupies residues 244 to 264 (AVKWMYAIEACLSLTLLYPIA). Residues 265–276 (RWSEKRFRLEHR) are Cytoplasmic-facing. The chain crosses the membrane as a helical span at residues 277 to 297 (LMAGLLVMSLSMIPIGMVGNL). The Periplasmic portion of the chain corresponds to 298-299 (QQ). A helical membrane pass occupies residues 300 to 320 (LFTLICAFYIGSVIAEPARET). At 321 to 339 (LSASLADARARGSYMGFSR) the chain is on the cytoplasmic side. The chain crosses the membrane as a helical span at residues 340-360 (LGLAIGGAIGYIGGGWLFDMG). The Periplasmic segment spans residues 361-367 (KALTQPE). The helical transmembrane segment at 368–388 (LPWMMLGIIGFITFLALGWQF) threads the bilayer. Residues 389–402 (SHKRTPRRMLEPGA) are Cytoplasmic-facing.

Belongs to the major facilitator superfamily. DHA1 family. MdtH (TC 2.A.1.2.21) subfamily.

The protein localises to the cell inner membrane. The polypeptide is Multidrug resistance protein MdtH (Salmonella choleraesuis (strain SC-B67)).